The chain runs to 721 residues: Polyribonucleotide nucleotidyltransferase (721 aa).

2 residues coordinate Mg(2+): Asp495 and Asp501. The 60-residue stretch at 562–621 (PRLLSFRIDPELIGTVIGPGGRTIKNITERTNTKIDIEDSGIVTIASHDGAAAEEAQKII) folds into the KH domain. Residues 631–699 (GEVFTGSITR…NRGRINLTLR (69 aa)) enclose the S1 motif domain. Residues 700–721 (GVPQSGESADSQPAPTPVAPLS) form a disordered region.

This sequence belongs to the polyribonucleotide nucleotidyltransferase family. Mg(2+) serves as cofactor.

The protein localises to the cytoplasm. The enzyme catalyses RNA(n+1) + phosphate = RNA(n) + a ribonucleoside 5'-diphosphate. Its function is as follows. Involved in mRNA degradation. Catalyzes the phosphorolysis of single-stranded polyribonucleotides processively in the 3'- to 5'-direction. This chain is Polyribonucleotide nucleotidyltransferase, found in Synechococcus sp. (strain CC9311).